Here is a 482-residue protein sequence, read N- to C-terminus: Putative metallophosphoesterase F40B5.2 (482 aa).

4 helical membrane-spanning segments follow: residues 15-35 (MNLK…SIAI), 129-149 (ALMM…YIFL), 156-176 (IAIT…FLLI), and 205-225 (CYHI…GLYT). Positions 256, 258, 288, 319, 421, and 423 each coordinate a divalent metal cation.

It belongs to the metallophosphoesterase superfamily. LOC643853 family.

The protein localises to the membrane. This Caenorhabditis elegans protein is Putative metallophosphoesterase F40B5.2.